A 194-amino-acid polypeptide reads, in one-letter code: Molybdenum cofactor guanylyltransferase (194 aa).

GTP contacts are provided by residues 12–14, Lys25, Asn53, Asp70, and Asp100; that span reads LAG. Asp100 provides a ligand contact to Mg(2+).

This sequence belongs to the MobA family. In terms of assembly, monomer. Mg(2+) serves as cofactor.

It is found in the cytoplasm. The catalysed reaction is Mo-molybdopterin + GTP + H(+) = Mo-molybdopterin guanine dinucleotide + diphosphate. Functionally, transfers a GMP moiety from GTP to Mo-molybdopterin (Mo-MPT) cofactor (Moco or molybdenum cofactor) to form Mo-molybdopterin guanine dinucleotide (Mo-MGD) cofactor. This is Molybdenum cofactor guanylyltransferase from Aliivibrio fischeri (strain MJ11) (Vibrio fischeri).